The chain runs to 542 residues: Serine/threonine-protein phosphatase 2A regulatory subunit pptr-1 (542 aa).

Disordered regions lie at residues 1 to 28 and 500 to 542; these read MHGS…TGGQ and DYLK…PAKK. Over residues 528-542 the composition is skewed to polar residues; the sequence is KKSSTGSETTTPAKK.

The protein belongs to the phosphatase 2A regulatory subunit B56 family. Part of a complex consisting of a common heterodimeric core enzyme, composed of catalytic subunit let-92 and constant regulatory subunit paa-1, that associates with a variety of regulatory subunits which confer distinct properties to the holoenzyme. Interacts with akt-1 but not akt-2. Interacts with sgk-1. Interacts with P granule components meg-1, meg-3 and meg-4. As to expression, expressed in pharynx, vulva and spermatheca.

The protein localises to the cytoplasm. Its function is as follows. Probable regulatory subunit of serine/threonine-protein phosphatase let-92 which negatively regulates the insulin receptor signaling cascade composed of daf-2, age-1, akt-1, akt-2 and sgk-1 by promoting the dephosphorylation of akt-1 on 'Thr-350'. Negatively regulates several functions controlled by the insulin pathway including dauer formation, lifespan, fat storage and stress resistance. Plays a role in the asymmetric segregation of the P granule components during embryonic cell divisions but does not play an essential role in specifying germ cell fate. Within a PP2A phosphatase complex, acts redundantly with pptr-2, to dephosphorylate P granule components including meg-1 and meg-3 to promote the assembly and accumulation of zygotic P granules in the posterior cytoplasm during zygote polarization, and thus maintain P granule distribution and segregation in early stage embryos following meiosis. In adults, required to promote germ cell proliferation and differentiation when exposed to thermic stress. The chain is Serine/threonine-protein phosphatase 2A regulatory subunit pptr-1 from Caenorhabditis elegans.